Reading from the N-terminus, the 636-residue chain is 1-deoxy-D-xylulose-5-phosphate synthase (636 aa).

Thiamine diphosphate-binding positions include His-73 and 114-116 (SHA). Residue Asp-146 coordinates Mg(2+). Thiamine diphosphate contacts are provided by residues 147–148 (GA), Asn-176, Tyr-287, and Glu-368. Mg(2+) is bound at residue Asn-176.

It belongs to the transketolase family. DXPS subfamily. As to quaternary structure, homodimer. The cofactor is Mg(2+). Thiamine diphosphate is required as a cofactor.

It catalyses the reaction D-glyceraldehyde 3-phosphate + pyruvate + H(+) = 1-deoxy-D-xylulose 5-phosphate + CO2. It participates in metabolic intermediate biosynthesis; 1-deoxy-D-xylulose 5-phosphate biosynthesis; 1-deoxy-D-xylulose 5-phosphate from D-glyceraldehyde 3-phosphate and pyruvate: step 1/1. Functionally, catalyzes the acyloin condensation reaction between C atoms 2 and 3 of pyruvate and glyceraldehyde 3-phosphate to yield 1-deoxy-D-xylulose-5-phosphate (DXP). The sequence is that of 1-deoxy-D-xylulose-5-phosphate synthase from Corynebacterium glutamicum (strain ATCC 13032 / DSM 20300 / JCM 1318 / BCRC 11384 / CCUG 27702 / LMG 3730 / NBRC 12168 / NCIMB 10025 / NRRL B-2784 / 534).